A 74-amino-acid polypeptide reads, in one-letter code: Large ribosomal subunit protein bL28 (74 aa).

Belongs to the bacterial ribosomal protein bL28 family.

This is Large ribosomal subunit protein bL28 from Desulforapulum autotrophicum (strain ATCC 43914 / DSM 3382 / VKM B-1955 / HRM2) (Desulfobacterium autotrophicum).